The primary structure comprises 486 residues: NADH-quinone oxidoreductase subunit N 1 (486 aa).

14 helical membrane-spanning segments follow: residues 15–35 (FLPE…DPVI), 46–66 (ISLI…GIAG), 72–92 (MLMV…VGIL), 111–128 (YHAL…MAAS), 131–151 (LIMV…LAGY), 166–186 (FLLG…IYGL), 208–228 (FVGI…SAAP), 241–261 (PTPV…AIFL), 276–296 (QPLV…AAIL), 303–323 (MLAY…TAHS), 331–351 (MFYL…VSVL), 375–395 (AAMF…GGFF), 410–432 (IWLT…RILV), and 455–475 (FALI…GWVL).

This sequence belongs to the complex I subunit 2 family. In terms of assembly, NDH-1 is composed of 14 different subunits. Subunits NuoA, H, J, K, L, M, N constitute the membrane sector of the complex.

Its subcellular location is the cell inner membrane. It carries out the reaction a quinone + NADH + 5 H(+)(in) = a quinol + NAD(+) + 4 H(+)(out). In terms of biological role, NDH-1 shuttles electrons from NADH, via FMN and iron-sulfur (Fe-S) centers, to quinones in the respiratory chain. The immediate electron acceptor for the enzyme in this species is believed to be ubiquinone. Couples the redox reaction to proton translocation (for every two electrons transferred, four hydrogen ions are translocated across the cytoplasmic membrane), and thus conserves the redox energy in a proton gradient. This chain is NADH-quinone oxidoreductase subunit N 1, found in Solibacter usitatus (strain Ellin6076).